The chain runs to 310 residues: GPN-loop GTPase 2 (310 aa).

Residue A2 is modified to N-acetylalanine. A GTP-binding site is contributed by 19-24; the sequence is GSGKTT. A Gly-Pro-Asn (GPN)-loop; involved in dimer interface motif is present at residues 76 to 78; that stretch reads GPN. GTP is bound at residue 178–181; the sequence is SKMD.

This sequence belongs to the GPN-loop GTPase family. As to quaternary structure, heterodimers with GPN1 or GPN3. Binds to RNA polymerase II (RNAPII).

Its function is as follows. Small GTPase required for proper localization of RNA polymerase II and III (RNAPII and RNAPIII). May act at an RNAP assembly step prior to nuclear import. The chain is GPN-loop GTPase 2 from Mus musculus (Mouse).